The chain runs to 390 residues: Magnesium-protoporphyrin IX monomethyl ester [oxidative] cyclase (390 aa).

This sequence belongs to the AcsF family. Requires Fe cation as cofactor.

It catalyses the reaction Mg-protoporphyrin IX 13-monomethyl ester + 3 NADPH + 3 O2 + 2 H(+) = 3,8-divinyl protochlorophyllide a + 3 NADP(+) + 5 H2O. It functions in the pathway porphyrin-containing compound metabolism; chlorophyll biosynthesis (light-independent). In terms of biological role, catalyzes the formation of the isocyclic ring in chlorophyll biosynthesis. Mediates the cyclase reaction, which results in the formation of divinylprotochlorophyllide (Pchlide) characteristic of all chlorophylls from magnesium-protoporphyrin IX 13-monomethyl ester (MgPMME). This Prochlorococcus marinus (strain AS9601) protein is Magnesium-protoporphyrin IX monomethyl ester [oxidative] cyclase.